We begin with the raw amino-acid sequence, 390 residues long: Glutamate 5-kinase (390 aa).

Lys29 contacts ATP. The substrate site is built by Ser69, Asp156, and Asn168. 188 to 189 is a binding site for ATP; that stretch reads TD. The region spanning 295–374 is the PUA domain; the sequence is SGSLIVDAGA…EQFDRILGNN (80 aa).

It belongs to the glutamate 5-kinase family.

The protein resides in the cytoplasm. The enzyme catalyses L-glutamate + ATP = L-glutamyl 5-phosphate + ADP. It participates in amino-acid biosynthesis; L-proline biosynthesis; L-glutamate 5-semialdehyde from L-glutamate: step 1/2. In terms of biological role, catalyzes the transfer of a phosphate group to glutamate to form L-glutamate 5-phosphate. This chain is Glutamate 5-kinase, found in Psychrobacter arcticus (strain DSM 17307 / VKM B-2377 / 273-4).